A 236-amino-acid polypeptide reads, in one-letter code: MAFSIKMRASKGDKHISGAETIVMEKENIENITAGYIKRALEHELGAPDFINIKIDKINKKDIIYIDALPIKTINCKNKEDARRVAKNLLKNEGISDKLIEKSFKIIDDGGMRGAPILNLNGERLEPDKERGVRVKNISTTEELKEKILKNNIGTDRTVDAIAIASKVINLGVIAELCTSDNNSYTTGYVATKNGYFRITNLKQENENGGRVFFVKNDTNIEDLIYKLENKPYIIK.

The protein belongs to the BioW family. In terms of assembly, homodimer. Requires Mg(2+) as cofactor.

The enzyme catalyses heptanedioate + ATP + CoA = 6-carboxyhexanoyl-CoA + AMP + diphosphate. The protein operates within metabolic intermediate metabolism; pimeloyl-CoA biosynthesis; pimeloyl-CoA from pimelate: step 1/1. In terms of biological role, catalyzes the transformation of pimelate into pimeloyl-CoA with concomitant hydrolysis of ATP to AMP. This is 6-carboxyhexanoate--CoA ligase from Methanococcus aeolicus (strain ATCC BAA-1280 / DSM 17508 / OCM 812 / Nankai-3).